Here is a 330-residue protein sequence, read N- to C-terminus: Pantothenate synthetase 2 (330 aa).

Catalysis depends on H55, which acts as the Proton donor. ATP-binding positions include 167–170 (GEKD), V196, and 204–207 (ASSR).

It belongs to the pantothenate synthetase family. Homodimer.

It is found in the cytoplasm. It catalyses the reaction (R)-pantoate + beta-alanine + ATP = (R)-pantothenate + AMP + diphosphate + H(+). It participates in cofactor biosynthesis; (R)-pantothenate biosynthesis; (R)-pantothenate from (R)-pantoate and beta-alanine: step 1/1. Catalyzes the condensation of pantoate with beta-alanine in an ATP-dependent reaction via a pantoyl-adenylate intermediate. The sequence is that of Pantothenate synthetase 2 from Frankia alni (strain DSM 45986 / CECT 9034 / ACN14a).